A 775-amino-acid polypeptide reads, in one-letter code: Chloride channel protein CLC-a (775 aa).

Residues 1–28 (MDEDGNLQISNSNYNGEEEGEDPENNTL) are disordered. The next 12 helical transmembrane spans lie at 88–108 (TLAC…NLAV), 131–151 (GLMV…VLVV), 178–198 (FGFT…AAGL), 206–226 (LVHI…DNHR), 248–268 (GSAS…LFAL), 278–298 (ALLW…RAFI), 328–348 (AADI…GSLY), 371–391 (VLLS…LPFL), 453–473 (MVSL…TFGI), 478–498 (GLFL…GTAM), 510–530 (AVLG…SLCV), and 531–551 (IFLE…VLLI). CBS domains follow at residues 595 to 658 (AKPP…FLNE) and 703 to 768 (TNTT…HLDK). Residues 730–750 (HLLVVPKIQASGMSPVIGILT) form a helical membrane-spanning segment.

The protein belongs to the chloride channel (TC 2.A.49) family. In terms of assembly, homodimer. Interacts with PP2A5. Broadly expressed in the plant.

Its subcellular location is the membrane. Functionally, voltage-gated chloride channel that could play a role in the regulation of nitrate content. In Arabidopsis thaliana (Mouse-ear cress), this protein is Chloride channel protein CLC-a (CLC-A).